Here is a 302-residue protein sequence, read N- to C-terminus: Probable alpha-L-glutamate ligase (302 aa).

In terms of domain architecture, ATP-grasp spans 104–287 (LQLLSRKGVG…VAGLLIKFIE (184 aa)). ATP-binding positions include K141, 178-179 (EY), D187, and 211-213 (RSN). D248, E260, and N262 together coordinate Mg(2+). Mn(2+) is bound by residues D248, E260, and N262.

The protein belongs to the RimK family. Mg(2+) is required as a cofactor. Requires Mn(2+) as cofactor.

This Alcanivorax borkumensis (strain ATCC 700651 / DSM 11573 / NCIMB 13689 / SK2) protein is Probable alpha-L-glutamate ligase.